Here is a 509-residue protein sequence, read N- to C-terminus: Telomeric repeat-binding factor 2-interacting protein 1 (509 aa).

Residues methionine 1–leucine 91 form the BRCT domain. The interval glycine 93–serine 168 is disordered. The segment covering valine 115–glutamine 127 has biased composition (polar residues). A compositionally biased stretch (basic and acidic residues) spans arginine 159–serine 168. Positions arginine 185–leucine 239 constitute a Myb-like domain. 2 disordered regions span residues leucine 249–aspartate 359 and aspartate 399–glycine 423. Basic and acidic residues-rich tracts occupy residues glycine 286 to serine 296 and valine 321 to glutamate 344. Over residues proline 401–alanine 418 the composition is skewed to polar residues. The Nuclear localization signal signature appears at glutamine 493 to serine 509.

The protein belongs to the RAP1 family. As to quaternary structure, homodimer. Component of the shelterin complex (telosome). Interacts with terf2; the interaction is direct.

It is found in the nucleus. The protein localises to the chromosome. The protein resides in the telomere. Functionally, acts both as a regulator of telomere function and as a transcription regulator. Involved in the regulation of telomere length and protection as a component of the shelterin complex (telosome). Does not bind DNA directly: recruited to telomeric double-stranded 5'-TTAGGG-3' repeats via its interaction with terf2. Independently of its function in telomeres, also acts as a transcription regulator: recruited to extratelomeric 5'-TTAGGG-3' sites via its association with terf2 or other factors, and regulates gene expression. This Xenopus tropicalis (Western clawed frog) protein is Telomeric repeat-binding factor 2-interacting protein 1 (terf2ip).